We begin with the raw amino-acid sequence, 260 residues long: Indole-3-glycerol phosphate synthase (260 aa).

Belongs to the TrpC family.

The enzyme catalyses 1-(2-carboxyphenylamino)-1-deoxy-D-ribulose 5-phosphate + H(+) = (1S,2R)-1-C-(indol-3-yl)glycerol 3-phosphate + CO2 + H2O. It functions in the pathway amino-acid biosynthesis; L-tryptophan biosynthesis; L-tryptophan from chorismate: step 4/5. The protein is Indole-3-glycerol phosphate synthase of Staphylococcus aureus (strain MRSA252).